Consider the following 648-residue polypeptide: Macrolide export ATP-binding/permease protein MacB (648 aa).

Residues 5-243 (LELKDIRRSY…AGGTEPVVNT (239 aa)) enclose the ABC transporter domain. Residue 41 to 48 (GASGSGKS) participates in ATP binding. 4 helical membrane-spanning segments follow: residues 273–293 (LLTMLGIIIGIASVVSIVVVG), 523–543 (LFLTLVAVISLVVGGIGVMNI), 576–596 (AVLVCLVGGALGITLSLLIAF), and 600–620 (LFLPGWEIGFSPLALLLAFLC).

Belongs to the ABC transporter superfamily. Macrolide exporter (TC 3.A.1.122) family. Homodimer. Part of the tripartite efflux system MacAB-TolC, which is composed of an inner membrane transporter, MacB, a periplasmic membrane fusion protein, MacA, and an outer membrane component, TolC. The complex forms a large protein conduit and can translocate molecules across both the inner and outer membranes. Interacts with MacA.

Its subcellular location is the cell inner membrane. Part of the tripartite efflux system MacAB-TolC. MacB is a non-canonical ABC transporter that contains transmembrane domains (TMD), which form a pore in the inner membrane, and an ATP-binding domain (NBD), which is responsible for energy generation. Confers resistance against macrolides. The sequence is that of Macrolide export ATP-binding/permease protein MacB from Shigella flexneri.